Consider the following 624-residue polypeptide: Anti-CBASS protein Acb1 (624 aa).

Tyr106 contributes to the 3',3'-cGAMP binding site. Tyr106 is a 3',3'-cUAMP binding site. Active-site residues include His503, Thr505, His581, and Thr583. Trp617 contributes to the 3',3'-cGAMP binding site. Residue Trp617 coordinates 3',3'-cUAMP.

This sequence belongs to the anti-CBASS protein Acb1 family.

The catalysed reaction is 3',3'-cUAMP + H2O = U[3'-5']pAp[3'] + H(+). The enzyme catalyses 3',3',3'-c-tri-AMP + H2O = A[3'-5']pA[3'-5']pAp[3'] + H(+). It catalyses the reaction 3',3',3'-cAAG + H2O = G[3'-5']pA[3'-5']pAp[3'] + H(+). It carries out the reaction 3',3',3'-cAAG + H2O = A[3'-5']pG[3'-5']pAp[3'] + H(+). The catalysed reaction is 3',3'-cGAMP + H2O = G[3'-5']pAp[3'] + H(+). In terms of biological role, counteracts or regulates the endogenous CBASS antiviral defense system. Phosphodiesterase that enables metal-independent hydrolysis of the host cyclic di- and trinucleotide CBASS signals such as 3'3'-cGAMP, 3'3'cUA, and 3'3'3'-cAAA. The polypeptide is Anti-CBASS protein Acb1 (Sphingomonas paeninsulae).